The primary structure comprises 326 residues: Alkanal monooxygenase beta chain (326 aa).

The protein belongs to the bacterial luciferase oxidoreductase family. In terms of assembly, heterodimer of an alpha and a beta chain.

It carries out the reaction a long-chain fatty aldehyde + FMNH2 + O2 = a long-chain fatty acid + hnu + FMN + H2O + 2 H(+). Functionally, light-emitting reaction in luminous bacteria. The specific role of the beta subunit is unknown, but it is absolutely required for bioluminescence activity. This is Alkanal monooxygenase beta chain (luxB) from Aliivibrio fischeri (Vibrio fischeri).